The sequence spans 134 residues: Small ribosomal subunit protein uS8 (134 aa).

It belongs to the universal ribosomal protein uS8 family. Part of the 30S ribosomal subunit. Contacts proteins S5 and S12.

One of the primary rRNA binding proteins, it binds directly to 16S rRNA central domain where it helps coordinate assembly of the platform of the 30S subunit. This chain is Small ribosomal subunit protein uS8, found in Synechococcus sp. (strain JA-3-3Ab) (Cyanobacteria bacterium Yellowstone A-Prime).